A 558-amino-acid polypeptide reads, in one-letter code: Acid-sensing ion channel 4-B (558 aa).

Topologically, residues 1–71 (MPIEFVCKIK…TSERLGFRQT (71 aa)) are cytoplasmic. The helical transmembrane segment at 72–92 (LWGLALLVSLGLFLYQATWSA) threads the bilayer. Topologically, residues 93–433 (ATYLERPHLA…ETIEQKKAYD (341 aa)) are extracellular. 2 cysteine pairs are disulfide-bonded: cysteine 120-cysteine 204 and cysteine 182-cysteine 189. N-linked (GlcNAc...) asparagine glycans are attached at residues asparagine 140, asparagine 183, asparagine 188, asparagine 210, and asparagine 245. 5 disulfide bridges follow: cysteine 298–cysteine 373, cysteine 317–cysteine 369, cysteine 321–cysteine 367, cysteine 330–cysteine 351, and cysteine 332–cysteine 344. Asparagine 374 carries an N-linked (GlcNAc...) asparagine glycan. The helical transmembrane segment at 434–454 (IAGLLGDIGGQMGLFIGASIL) threads the bilayer. A GAS motif; ion selectivity filter motif is present at residues 450-452 (GAS). Residues 455-558 (TILEILDYIY…QQAVQQDFAC (104 aa)) lie on the Cytoplasmic side of the membrane.

Belongs to the amiloride-sensitive sodium channel (TC 1.A.6) family. ASIC4 subfamily. Homotrimer. Heterotrimer; with other ASIC proteins producing functional channels. Expressed in central nervous system.

It is found in the cell membrane. The catalysed reaction is Na(+)(in) = Na(+)(out). In terms of biological role, does not exhibit measurable stand-alone pH-gated sodium channel activity but may form pH-gated heterotrimeric sodium channels. This chain is Acid-sensing ion channel 4-B, found in Danio rerio (Zebrafish).